A 325-amino-acid chain; its full sequence is Putative HTH-type transcriptional regulatory protein HQ_3058A (325 aa).

The HTH cro/C1-type domain maps to 132–186; it reads LADEREERGWSLGRLATELGVSRRTVSKYEDGMNASIEIAIQLEEVFDEPFSSPL. The H-T-H motif DNA-binding region spans 143-162; sequence LGRLATELGVSRRTVSKYED. Residues 189–211 form a disordered region; it reads MEGAESVRDSEPTPDDPDPDADD. Over residues 200-211 the composition is skewed to acidic residues; that stretch reads PTPDDPDPDADD.

The polypeptide is Putative HTH-type transcriptional regulatory protein HQ_3058A (Haloquadratum walsbyi (strain DSM 16790 / HBSQ001)).